A 112-amino-acid polypeptide reads, in one-letter code: Large ribosomal subunit protein eL33y (112 aa).

Belongs to the eukaryotic ribosomal protein eL33 family.

The sequence is that of Large ribosomal subunit protein eL33y (RPL35AC) from Arabidopsis thaliana (Mouse-ear cress).